The primary structure comprises 537 residues: Synaptotagmin-2 (537 aa).

Over 1–2 the chain is Cytoplasmic; it reads MG. The helical transmembrane segment at 3-23 threads the bilayer; the sequence is IISTILGVIGFGFGTTIGIVI. Residues 24 to 537 lie on the Lumenal side of the membrane; that stretch reads GYYLFIYFQS…QIELQWRNSS (514 aa). The 183-residue stretch at 67–249 folds into the SMP-LTD domain; the sequence is DFDRIDWLNK…WPKTLNVQIM (183 aa). Residues 227-505 form a phospholipid binding region; sequence QEIIKDQVAN…TLGYVVINLG (279 aa). 2 C2 domains span residues 240–362 and 402–517; these read WPKT…LMTL and DPNA…NDKY. Residues aspartate 276, aspartate 282, aspartate 332, and glutamate 334 each coordinate Ca(2+).

This sequence belongs to the synaptotagmin family. Ca(2+) serves as cofactor.

The protein localises to the golgi apparatus membrane. May play an important role in regulating an unconventional protein trafficking from the cytosol to the extracellular matrix. The polypeptide is Synaptotagmin-2 (SYT2) (Arabidopsis thaliana (Mouse-ear cress)).